The following is a 147-amino-acid chain: Endoribonuclease YbeY (147 aa).

Residues His107, His111, and His117 each contribute to the Zn(2+) site.

It belongs to the endoribonuclease YbeY family. Requires Zn(2+) as cofactor.

The protein resides in the cytoplasm. Its function is as follows. Single strand-specific metallo-endoribonuclease involved in late-stage 70S ribosome quality control and in maturation of the 3' terminus of the 16S rRNA. This is Endoribonuclease YbeY from Solibacter usitatus (strain Ellin6076).